The primary structure comprises 484 residues: Adenylyltransferase and sulfurtransferase uba4 (484 aa).

Low complexity predominate over residues 39–49 (AKAQSAAATTA). Residues 39-58 (AKAQSAAATTAGDNHDKPRR) are disordered. Residues G98, D119, 126-130 (SNLHR), K143, and 187-188 (DN) contribute to the ATP site. Zn(2+) contacts are provided by C236 and C239. The active-site Glycyl thioester intermediate; for adenylyltransferase activity is the C253. The Zn(2+) site is built by C313 and C316. The region spanning 370 to 482 (PEKTPTLIDV…WREQVDPEWP (113 aa)) is the Rhodanese domain. Residue C437 is the Cysteine persulfide intermediate; for sulfurtransferase activity of the active site.

The protein in the N-terminal section; belongs to the HesA/MoeB/ThiF family. UBA4 subfamily. The cofactor is Zn(2+).

It is found in the cytoplasm. The protein resides in the cytosol. The catalysed reaction is [molybdopterin-synthase sulfur-carrier protein]-C-terminal Gly-Gly + ATP + H(+) = [molybdopterin-synthase sulfur-carrier protein]-C-terminal Gly-Gly-AMP + diphosphate. The enzyme catalyses [molybdopterin-synthase sulfur-carrier protein]-C-terminal Gly-Gly-AMP + S-sulfanyl-L-cysteinyl-[cysteine desulfurase] + AH2 = [molybdopterin-synthase sulfur-carrier protein]-C-terminal-Gly-aminoethanethioate + L-cysteinyl-[cysteine desulfurase] + A + AMP + 2 H(+). The protein operates within tRNA modification; 5-methoxycarbonylmethyl-2-thiouridine-tRNA biosynthesis. Its pathway is cofactor biosynthesis; molybdopterin biosynthesis. Its function is as follows. Plays a central role in 2-thiolation of mcm(5)S(2)U at tRNA wobble positions of cytosolic tRNA(Lys), tRNA(Glu) and tRNA(Gln). Also essential during biosynthesis of the molybdenum cofactor. Acts by mediating the C-terminal thiocarboxylation of sulfur carriers urm1 and mocs2a. Its N-terminus first activates urm1 and mocs2a as acyl-adenylates (-COAMP), then the persulfide sulfur on the catalytic cysteine is transferred to urm1 and mocs2a to form thiocarboxylation (-COSH) of their C-terminus. The reaction probably involves hydrogen sulfide that is generated from the persulfide intermediate and that acts as a nucleophile towards urm1 and mocs2a. Subsequently, a transient disulfide bond is formed. Does not use thiosulfate as sulfur donor; nfs1 probably acting as a sulfur donor for thiocarboxylation reactions. The chain is Adenylyltransferase and sulfurtransferase uba4 from Aspergillus terreus (strain NIH 2624 / FGSC A1156).